The primary structure comprises 909 residues: MSSGDAPPQAQPQPHQQEQPNQRQSSTPAPSAAPVPPAPSTSTSNSAGGVSFRRQRASRACETCHARKVRCDAASLGVPCTNCVAFQIECRIPNPKRKKTQGTGGSQTNKDSDSDRGDGTEDPSPRPVAPTAASFAPRTPSVFHSHNGTPPTTLTEAQARKEEVDSGTYLDLVMKPKFTRAPITEAGRVAYLGESSNLTLLVHDRQGSADVVHYPLPENVRGSRARLTELDNVEIDILHQRGAFLLPPRALCDELIDAYFSWVHPIVPVINRTRFMRQYRDPKNPPSLLLLQSVLLAGTRACNNAQLMDANGSTTPAALTFYKRAKALYDANYEDDRVTIVQSLLLMGWYWEGPEDVTKNVFYWSRVATIVAQGSGMHRSVEQSQLSRSDKRLWKRIWWTLFTRDRSVAVALGRPVHINLDDADVEMLTEDDFIEDEQDRVSEYPPDPIHVQFFLEYVKLCEIMGLVLSQQYSVASKGRQRNAIDLTHSDMALADWLQNCPKIVYWEVPRHHFWSALLHSNYYTTLCLLHRAHMPPGGSARFPDPSPYPSRNIAFQAAAMITSIVENLAAHDQLRYCPAFVVYSLFSALIRHVYQMRSPVPSIQQVTQDRLRSCMSAMKEISRVWLVGKMVYALFESIIGNKVLEERLQKAEGKRHRKMRQTLTTQLEQHSRQQEAPKRKYDEMAIDFGTNTPQPQESYERSRPQTPSAVKAETSSMQPPPVSSPGARQSAADTFMGGTNSRPQTRPATPFNPSFSVPPTPPDLYLVTRNSPNLSQSLWENFQPDQLFPDSAAMPAFPNLSPIQTHASLDHSAMGPVPGNGQGGMPNQQAGQFQQRGNGILPQGFQGHTNMWQPNLDPNLPEGQSPDSWSSTSGQGQAVPTTLNVEDWFQFFGINGTDPNHLNLDIPLG.

The segment at 1-51 (MSSGDAPPQAQPQPHQQEQPNQRQSSTPAPSAAPVPPAPSTSTSNSAGGVS) is disordered. Residues 12–30 (PQPHQQEQPNQRQSSTPAP) show a composition bias toward low complexity. Positions 61–90 (CETCHARKVRCDAASLGVPCTNCVAFQIEC) form a DNA-binding region, zn(2)-C6 fungal-type. Disordered stretches follow at residues 95 to 159 (PKRK…EAQA), 651 to 757 (AEGK…SFSV), and 841 to 878 (LPQGFQGHTNMWQPNLDPNLPEGQSPDSWSSTSGQGQA). The span at 110-119 (KDSDSDRGDG) shows a compositional bias: basic and acidic residues. Residues 142-156 (VFHSHNGTPPTTLTE) show a composition bias toward polar residues. Residues 669–683 (QHSRQQEAPKRKYDE) show a composition bias toward basic and acidic residues. Polar residues-rich tracts occupy residues 704–717 (PQTPSAVKAETSSM), 737–755 (GGTNSRPQTRPATPFNPSF), and 865–878 (SPDSWSSTSGQGQA).

The protein resides in the nucleus. This chain is Cutinase transcription factor 1 alpha (CTF1-ALPHA), found in Fusarium vanettenii (Neocosmospora pisi).